A 390-amino-acid chain; its full sequence is LL-diaminopimelate aminotransferase (390 aa).

Substrate is bound by residues Tyr-13, Gly-38, Lys-102, Tyr-126, and Asn-176. Residues 101–102 (SK), Tyr-126, Asn-176, Tyr-207, and 235–237 (SVS) contribute to the pyridoxal 5'-phosphate site. Lys-238 is modified (N6-(pyridoxal phosphate)lysine). A pyridoxal 5'-phosphate-binding site is contributed by Arg-246. Residue Arg-364 coordinates substrate.

It belongs to the class-I pyridoxal-phosphate-dependent aminotransferase family. LL-diaminopimelate aminotransferase subfamily. In terms of assembly, homodimer. Requires pyridoxal 5'-phosphate as cofactor.

The enzyme catalyses (2S,6S)-2,6-diaminopimelate + 2-oxoglutarate = (S)-2,3,4,5-tetrahydrodipicolinate + L-glutamate + H2O + H(+). Its pathway is amino-acid biosynthesis; L-lysine biosynthesis via DAP pathway; LL-2,6-diaminopimelate from (S)-tetrahydrodipicolinate (aminotransferase route): step 1/1. Its function is as follows. Involved in the synthesis of meso-diaminopimelate (m-DAP or DL-DAP), required for both lysine and peptidoglycan biosynthesis. Catalyzes the direct conversion of tetrahydrodipicolinate to LL-diaminopimelate. Is also able to catalyze the reverse reaction in vitro, i.e. the transamination of LL-diaminopimelate with 2-oxoglutarate to produce tetrahydrodipicolinate and glutamate. Can also use m-DAP instead of LL-DAP as the amino-group donor, and oxaloacetate instead of 2-oxoglutarate as the amino-group acceptor. The chain is LL-diaminopimelate aminotransferase from Moorella thermoacetica (strain ATCC 39073 / JCM 9320).